The primary structure comprises 145 residues: SsrA-binding protein (145 aa).

It belongs to the SmpB family.

The protein resides in the cytoplasm. Functionally, required for rescue of stalled ribosomes mediated by trans-translation. Binds to transfer-messenger RNA (tmRNA), required for stable association of tmRNA with ribosomes. tmRNA and SmpB together mimic tRNA shape, replacing the anticodon stem-loop with SmpB. tmRNA is encoded by the ssrA gene; the 2 termini fold to resemble tRNA(Ala) and it encodes a 'tag peptide', a short internal open reading frame. During trans-translation Ala-aminoacylated tmRNA acts like a tRNA, entering the A-site of stalled ribosomes, displacing the stalled mRNA. The ribosome then switches to translate the ORF on the tmRNA; the nascent peptide is terminated with the 'tag peptide' encoded by the tmRNA and targeted for degradation. The ribosome is freed to recommence translation, which seems to be the essential function of trans-translation. The protein is SsrA-binding protein of Mycoplasmopsis pulmonis (strain UAB CTIP) (Mycoplasma pulmonis).